We begin with the raw amino-acid sequence, 286 residues long: Homoserine kinase (286 aa).

ATP is bound at residue 78–88 (PVAHGLGSSSS).

Belongs to the GHMP kinase family. Homoserine kinase subfamily.

It is found in the cytoplasm. The enzyme catalyses L-homoserine + ATP = O-phospho-L-homoserine + ADP + H(+). The protein operates within amino-acid biosynthesis; L-threonine biosynthesis; L-threonine from L-aspartate: step 4/5. Its function is as follows. Catalyzes the ATP-dependent phosphorylation of L-homoserine to L-homoserine phosphate. The protein is Homoserine kinase of Limosilactobacillus fermentum (strain NBRC 3956 / LMG 18251) (Lactobacillus fermentum).